The chain runs to 152 residues: UPF0178 protein SAB0630c (152 aa).

Belongs to the UPF0178 family.

The polypeptide is UPF0178 protein SAB0630c (Staphylococcus aureus (strain bovine RF122 / ET3-1)).